A 619-amino-acid polypeptide reads, in one-letter code: Zinc finger protein 668 (619 aa).

The residue at position 1 (M1) is an N-acetylmethionine. A Phosphoserine modification is found at S10. A C2H2-type 1 zinc finger spans residues 22-44 (YKCLFCTKTFPNAPRAARHAATH). The segment at 36–74 (RAARHAATHTPTDCTEEVREAQPKVDTEPKAEEASGDKV) is disordered. Basic and acidic residues predominate over residues 51 to 71 (EEVREAQPKVDTEPKAEEASG). Glycyl lysine isopeptide (Lys-Gly) (interchain with G-Cter in SUMO2) cross-links involve residues K59, K65, and K80. 11 consecutive C2H2-type zinc fingers follow at residues 84–106 (YACPLCPKAYKTAPELRSHGRSH), 112–134 (FPCPECGRRFMQPVCLRVHLASH), 140–162 (FRCTHCPKAYGTLSKLKIHQRGH), 168–190 (YACPDCGKSFADPSVFRKHRRTH), 196–218 (YSCERCGKAYAELKDLRNHERSH), 224–246 (FLCSECGKSFSRSSSLTCHQRIH), 252–274 (YRCPACGKGFTQLSSYQSHERTH), 280–302 (FLCPRCGRMFSDPSSFRRHQRAH), 308–330 (YRCEKCGKDFRQPADLAMHRRVH), 336–358 (FKCLQCDKTFVASWDLKRHALVH), and 364–386 (FRCEECGRAFAERASLTKHSRMH). Residue K154 forms a Glycyl lysine isopeptide (Lys-Gly) (interchain with G-Cter in SUMO2) linkage. At S387 the chain carries Phosphoserine. A C2H2-type 13 zinc finger spans residues 392-414 (FHCNACGKSFVVLSSLRKHERTH). Residues 491 to 513 (VGEAPSTLGDAGEVGGEETDEKP) are disordered. K512 is covalently cross-linked (Glycyl lysine isopeptide (Lys-Gly) (interchain with G-Cter in SUMO2)). 3 consecutive C2H2-type zinc fingers follow at residues 516–538 (FVCRECKETFSTLTLLRRHERSH), 544–566 (FPCTQCGKSFSDRAGLRKHSRTH), and 572–594 (YSCSQCPKAFLSASDLRKHERTH).

The protein belongs to the krueppel C2H2-type zinc-finger protein family.

It localises to the nucleus. In terms of biological role, may be involved in transcriptional regulation. May play a role in DNA repair process. The protein is Zinc finger protein 668 (Znf668) of Mus musculus (Mouse).